The sequence spans 533 residues: Invertase (533 aa).

Positions 1 to 22 are cleaved as a signal peptide; sequence MVQVLSVLVIPLLTLFFGYVAS. Residues 47–50 and Gln68 each bind substrate; that span reads WMND. The active site involves Asp50. N-linked (GlcNAc...) asparagine glycosylation is present at Asn72. Residue 110–111 coordinates substrate; sequence FS. Residues Asn119, Asn120, and Asn126 are each glycosylated (N-linked (GlcNAc...) asparagine). Residue 178–179 coordinates substrate; sequence RD. Asn219 carries N-linked (GlcNAc...) asparagine glycosylation. Trp314 provides a ligand contact to substrate. Residues Asn334, Asn392, and Asn419 are each glycosylated (N-linked (GlcNAc...) asparagine).

This sequence belongs to the glycosyl hydrolase 32 family.

The enzyme catalyses Hydrolysis of terminal non-reducing beta-D-fructofuranoside residues in beta-D-fructofuranosides.. The protein is Invertase (INV) of Schwanniomyces occidentalis (Yeast).